The chain runs to 109 residues: MQQFLHSMKHYAIFFAVIAALTYVLTLVLGADKVDLDKYSTVTITKGDTLWELSNKYHNHHHLTTNEFVKWVEDVNDLNSDTAQSLSPGDKLYIPVLKKELHNQVAIEQ.

In terms of domain architecture, LysM spans 40 to 94; the sequence is STVTITKGDTLWELSNKYHNHHHLTTNEFVKWVEDVNDLNSDTAQSLSPGDKLYI.

It belongs to the YneA family.

The protein localises to the cytoplasm. Its function is as follows. Inhibits cell division during the SOS response. Affects a later stage of the cell division protein assembly, after the assembly of the Z ring, by probably suppressing recruitment of FtsL and/or DivIC to the division machinery. The polypeptide is Cell division suppressor protein YneA (Priestia megaterium (strain DSM 319 / IMG 1521) (Bacillus megaterium)).